Here is a 577-residue protein sequence, read N- to C-terminus: Methionine--tRNA ligase, mitochondrial (577 aa).

Residues 25-37 (PIFYVNAAPHIGH) carry the 'HIGH' region motif. Residues 329 to 333 (KMSKS) carry the 'KMSKS' region motif. K332 contacts ATP.

It belongs to the class-I aminoacyl-tRNA synthetase family.

It is found in the mitochondrion matrix. It catalyses the reaction tRNA(Met) + L-methionine + ATP = L-methionyl-tRNA(Met) + AMP + diphosphate. This chain is Methionine--tRNA ligase, mitochondrial (MSM1), found in Candida albicans (Yeast).